The primary structure comprises 359 residues: Double-stranded RNA-binding protein 3 (359 aa).

2 consecutive DRBM domains span residues 1 to 70 and 87 to 155; these read MYKN…ALSS and IYKN…SLRK. The span at 266–280 shows a compositional bias: basic and acidic residues; it reads EKKQSLDDPKPEMRI. Disordered regions lie at residues 266–292 and 328–359; these read EKKQ…SSSV and APPP…SLPN. The segment covering 328 to 338 has biased composition (pro residues); sequence APPPKPNPNPN.

Its function is as follows. Binds double-stranded RNA. This chain is Double-stranded RNA-binding protein 3 (DRB3), found in Arabidopsis thaliana (Mouse-ear cress).